The following is a 710-amino-acid chain: Integrator complex subunit 10 (710 aa).

The segment at 366 to 393 (IHKKRKLAEGREKTMSSDDEDPSGKARS) is disordered. The segment covering 372 to 381 (LAEGREKTMS) has biased composition (basic and acidic residues).

The protein belongs to the Integrator subunit 10 family. In terms of assembly, component of the Integrator complex, composed of core subunits INTS1, INTS2, INTS3, INTS4, INTS5, INTS6, INTS7, INTS8, INTS9/RC74, INTS10, INTS11/CPSF3L, INTS12, INTS13, INTS14 and INTS15. The core complex associates with protein phosphatase 2A subunits PPP2CA and PPP2R1A, to form the Integrator-PP2A (INTAC) complex. INTS10 is part of the tail subcomplex, composed of INTS10, INTS13, INTS14 and INTS15.

It is found in the nucleus. Functionally, component of the integrator complex, a multiprotein complex that terminates RNA polymerase II (Pol II) transcription in the promoter-proximal region of genes. The integrator complex provides a quality checkpoint during transcription elongation by driving premature transcription termination of transcripts that are unfavorably configured for transcriptional elongation: the complex terminates transcription by (1) catalyzing dephosphorylation of the C-terminal domain (CTD) of Pol II subunit POLR2A/RPB1 and SUPT5H/SPT5, (2) degrading the exiting nascent RNA transcript via endonuclease activity and (3) promoting the release of Pol II from bound DNA. The integrator complex is also involved in terminating the synthesis of non-coding Pol II transcripts, such as enhancer RNAs (eRNAs), small nuclear RNAs (snRNAs), telomerase RNAs and long non-coding RNAs (lncRNAs). The chain is Integrator complex subunit 10 (INTS10) from Gallus gallus (Chicken).